The primary structure comprises 363 residues: Cytochrome b (363 aa).

Transmembrane regions (helical) follow at residues 24–44, 68–90, 105–125, and 171–191; these read VGFS…CLAW, FVIR…IHIF, VWFI…IGYV, and LHVL…LHLF. Heme b-binding residues include histidine 74 and histidine 88. Residues histidine 175 and histidine 189 each coordinate heme b. Histidine 194 is an a ubiquinone binding site. 4 helical membrane passes run 219-239, 287-307, 321-341, and 342-362; these read FYLR…YVIF, FLMV…ILWF, LILF…VLAY, and PIWM…VCRL.

The protein belongs to the cytochrome b family. As to quaternary structure, the main subunits of complex b-c1 are: cytochrome b, cytochrome c1 and the Rieske protein. Requires heme b as cofactor.

Its subcellular location is the mitochondrion inner membrane. Its function is as follows. Component of the ubiquinol-cytochrome c reductase complex (complex III or cytochrome b-c1 complex) that is part of the mitochondrial respiratory chain. The b-c1 complex mediates electron transfer from ubiquinol to cytochrome c. Contributes to the generation of a proton gradient across the mitochondrial membrane that is then used for ATP synthesis. The sequence is that of Cytochrome b (MT-CYB) from Trypanosoma brucei brucei.